A 150-amino-acid chain; its full sequence is Galactose-binding lectin (150 aa).

Positions 16 and 19 each coordinate D-galactose. The N-linked (GlcNAc...) asparagine glycan is linked to Asn-26. D-galactose-binding positions include Asp-27, 35–37 (DIH), His-64, and Gly-67. An N-linked (GlcNAc...) asparagine glycan is attached at Asn-74. D-galactose is bound by residues Glu-75, 83–85 (DRH), His-108, and Gly-111. N-linked (GlcNAc...) asparagine glycosylation occurs at Asn-118. D-galactose-binding positions include Glu-119 and 127-129 (DKH).

In terms of assembly, homodimer. Likely to form large oligomers; oligomerization enhances hemagglutination activity. Post-translationally, glycosylated.

Hemagglutination activity is not dependent on divalent cations. Hemagglutination activity is highly inhibited by D-galactose and N-acetyl-D-galactosamine, and to a lesser extent by raffinose. Also inhibited by melibiose and alpha-lactose, but not by beta-lactose or D-glucose. In terms of biological role, D-galactose-binding lectin. Also binds N-acetyl-D-galactosamine. Has hemagglutination activity towards all types of human erythrocytes (O, A and B) and rabbit erythrocytes. Agglutinates Gram-negative and Gram-positive bacteria including E.coli DH5-alpha and L.plantarum ATCC8014, respectively, and has bacteriostatic activity against them. Also agglutinates M.lysodeikticus. May be involved in innate immunity by recognizing and eliminating pathogens. The polypeptide is Galactose-binding lectin (Mytilus californianus (California mussel)).